Reading from the N-terminus, the 448-residue chain is Probable glycine dehydrogenase (decarboxylating) subunit 1 (448 aa).

This sequence belongs to the GcvP family. N-terminal subunit subfamily. As to quaternary structure, the glycine cleavage system is composed of four proteins: P, T, L and H. In this organism, the P 'protein' is a heterodimer of two subunits.

The enzyme catalyses N(6)-[(R)-lipoyl]-L-lysyl-[glycine-cleavage complex H protein] + glycine + H(+) = N(6)-[(R)-S(8)-aminomethyldihydrolipoyl]-L-lysyl-[glycine-cleavage complex H protein] + CO2. The glycine cleavage system catalyzes the degradation of glycine. The P protein binds the alpha-amino group of glycine through its pyridoxal phosphate cofactor; CO(2) is released and the remaining methylamine moiety is then transferred to the lipoamide cofactor of the H protein. The sequence is that of Probable glycine dehydrogenase (decarboxylating) subunit 1 from Staphylococcus aureus (strain Mu3 / ATCC 700698).